The following is a 134-amino-acid chain: Arsenate reductase (134 aa).

Residues Cys-11, Cys-83, and Cys-90 each act as nucleophile in the active site. 2 cysteine pairs are disulfide-bonded: Cys-11–Cys-83 and Cys-83–Cys-90.

Belongs to the low molecular weight phosphotyrosine protein phosphatase family. Thioredoxin-coupled ArsC subfamily.

The protein resides in the cytoplasm. It catalyses the reaction arsenate + [thioredoxin]-dithiol + H(+) = arsenite + [thioredoxin]-disulfide + H2O. Catalyzes the reduction of arsenate [As(V)] to arsenite [As(III)]. The polypeptide is Arsenate reductase (Bacillus cereus (strain AH187)).